A 450-amino-acid chain; its full sequence is MIERNGLQRMPFRLNRRHMISGMASAAVLLGSRQALGQARVQITEGNVAPLPIAIPNFVGGTPSDNEVGAGVAKVITNNLKRSGLFAPIDQAAYIEKITNIDVPPQFANWKTINAQALVTGRMTRQGDGRLKAEFRLWDVATGQQLAGQQYFTSPEYWRRIAHIISDQIYERLTGEKGYFDSRVVFVDESGSSQRRVKRLALMDQDGANVRYLTRGADLVITPRFSPSTQEVTYMEFGQGDPRVYLFNIETGQREIVGNFPGMSFSPRFAPDGQRIIMSLQQGGNSNLFVMDLRSKSTTRLTDTPAIDTSPSYSPDGARICFESDRGGKPQIYVMGATGGGAQRISFGEGSYSTPVWSPRGDYIAFTKQGGGQFSIGIIKPDGSGERILTSGFHNEGPTFAPNGRVLMFFRDPGGGGGPSLYTIDVSGRNELKVPTPGFASDPAWSPLLS.

Residues 1–37 (MIERNGLQRMPFRLNRRHMISGMASAAVLLGSRQALG) form the signal peptide.

Belongs to the TolB family. In terms of assembly, the Tol-Pal system is composed of five core proteins: the inner membrane proteins TolA, TolQ and TolR, the periplasmic protein TolB and the outer membrane protein Pal. They form a network linking the inner and outer membranes and the peptidoglycan layer.

It localises to the periplasm. In terms of biological role, part of the Tol-Pal system, which plays a role in outer membrane invagination during cell division and is important for maintaining outer membrane integrity. The sequence is that of Tol-Pal system protein TolB from Nitrobacter winogradskyi (strain ATCC 25391 / DSM 10237 / CIP 104748 / NCIMB 11846 / Nb-255).